Here is a 360-residue protein sequence, read N- to C-terminus: Phospho-N-acetylmuramoyl-pentapeptide-transferase (360 aa).

10 helical membrane passes run 25 to 45 (RGILGVLTALTLSLCLGPWMI), 73 to 93 (TMGGALILSSIGISTLLWADL), 97 to 117 (YVWVVLLVTFLFGAIGWVDDY), 135 to 155 (FWQSVFGLCAAIFLYTTAPSA), 170 to 190 (IPLGIGFIVLTYFVIVGSSNA), 199 to 219 (GLAIMPTVMVGGALGIFCYLS), 236 to 256 (AGELIVFSGALIGAGLGFLWF), 263 to 283 (VFMGDVGALALGAALGTMAVI), 288 to 308 (MVLFIMGGVFVMETLSVVIQV), and 338 to 358 (VIVRFWIITVILVLIGLATLK).

The protein belongs to the glycosyltransferase 4 family. MraY subfamily. It depends on Mg(2+) as a cofactor.

It localises to the cell inner membrane. The catalysed reaction is UDP-N-acetyl-alpha-D-muramoyl-L-alanyl-gamma-D-glutamyl-meso-2,6-diaminopimeloyl-D-alanyl-D-alanine + di-trans,octa-cis-undecaprenyl phosphate = di-trans,octa-cis-undecaprenyl diphospho-N-acetyl-alpha-D-muramoyl-L-alanyl-D-glutamyl-meso-2,6-diaminopimeloyl-D-alanyl-D-alanine + UMP. It functions in the pathway cell wall biogenesis; peptidoglycan biosynthesis. Functionally, catalyzes the initial step of the lipid cycle reactions in the biosynthesis of the cell wall peptidoglycan: transfers peptidoglycan precursor phospho-MurNAc-pentapeptide from UDP-MurNAc-pentapeptide onto the lipid carrier undecaprenyl phosphate, yielding undecaprenyl-pyrophosphoryl-MurNAc-pentapeptide, known as lipid I. The polypeptide is Phospho-N-acetylmuramoyl-pentapeptide-transferase (Pseudomonas syringae pv. syringae (strain B728a)).